The chain runs to 216 residues: Histidine biosynthesis bifunctional protein HisIE (216 aa).

Residues 1–127 are phosphoribosyl-AMP cyclohydrolase; sequence MSFIDSLSPQ…GKIVAPPGDT (127 aa). Residues 128 to 216 are phosphoribosyl-ATP pyrophosphohydrolase; it reads LSQVFQVICD…VYRKLQERRR (89 aa).

This sequence in the N-terminal section; belongs to the PRA-CH family. The protein in the C-terminal section; belongs to the PRA-PH family.

The protein resides in the cytoplasm. It catalyses the reaction 1-(5-phospho-beta-D-ribosyl)-ATP + H2O = 1-(5-phospho-beta-D-ribosyl)-5'-AMP + diphosphate + H(+). It carries out the reaction 1-(5-phospho-beta-D-ribosyl)-5'-AMP + H2O = 1-(5-phospho-beta-D-ribosyl)-5-[(5-phospho-beta-D-ribosylamino)methylideneamino]imidazole-4-carboxamide. It participates in amino-acid biosynthesis; L-histidine biosynthesis; L-histidine from 5-phospho-alpha-D-ribose 1-diphosphate: step 2/9. It functions in the pathway amino-acid biosynthesis; L-histidine biosynthesis; L-histidine from 5-phospho-alpha-D-ribose 1-diphosphate: step 3/9. This is Histidine biosynthesis bifunctional protein HisIE (hisI) from Nostoc sp. (strain PCC 7120 / SAG 25.82 / UTEX 2576).